A 335-amino-acid chain; its full sequence is GTPase Obg (335 aa).

The 158-residue stretch at 1–158 (MFVDQITLEL…RLVELELKLI (158 aa)) folds into the Obg domain. Positions 159 to 334 (ADIGLVGFPN…LYDLFKSKLS (176 aa)) constitute an OBG-type G domain. Residues 165–172 (GFPNAGKS), 190–194 (FTTLH), 215–218 (DIPG), 285–288 (NKID), and 315–317 (SGL) contribute to the GTP site. Mg(2+)-binding residues include Ser-172 and Thr-192.

This sequence belongs to the TRAFAC class OBG-HflX-like GTPase superfamily. OBG GTPase family. Monomer. Mg(2+) is required as a cofactor.

It is found in the cytoplasm. In terms of biological role, an essential GTPase which binds GTP, GDP and possibly (p)ppGpp with moderate affinity, with high nucleotide exchange rates and a fairly low GTP hydrolysis rate. Plays a role in control of the cell cycle, stress response, ribosome biogenesis and in those bacteria that undergo differentiation, in morphogenesis control. The polypeptide is GTPase Obg (Chlamydia trachomatis serovar A (strain ATCC VR-571B / DSM 19440 / HAR-13)).